The primary structure comprises 267 residues: Cyclin-C (267 aa).

One can recognise a Cyclin N-terminal domain in the interval 48–151 (IQVLGEQLKL…LLENLDCCLI (104 aa)).

Belongs to the cyclin family. Cyclin C subfamily. In terms of assembly, component of the Cdk8 module of the Mediator complex, composed of CycC, Cdk8, kto and skd.

It is found in the nucleus. In terms of biological role, component of the Mediator complex, a coactivator involved in regulated gene transcription of nearly all RNA polymerase II-dependent genes. Mediator functions as a bridge to convey information from gene-specific regulatory proteins to the basal RNA polymerase II transcription machinery. Mediator is recruited to promoters by direct interactions with regulatory proteins and serves as a scaffold for the assembly of a functional preinitiation complex with RNA polymerase II and the general transcription factors. Binds to and activates cyclin-dependent kinase Cdk8 that phosphorylates the CTD (C-terminal domain) of the large subunit of RNA polymerase II (RNAp II), which may inhibit the formation of a transcription initiation complex. Required for leg and eye development and macrochaete specification or differentiation. This Drosophila melanogaster (Fruit fly) protein is Cyclin-C (CycC).